Consider the following 609-residue polypeptide: UvrABC system protein C (609 aa).

The GIY-YIG domain maps to 13-91 (HEPGVYRMYD…IKLYQPRYNV (79 aa)). Residues 201-236 (QQVLDYLIGKMEQASRNLDFEQAARYRDQIQAVRSV) enclose the UVR domain.

Belongs to the UvrC family. As to quaternary structure, interacts with UvrB in an incision complex.

It localises to the cytoplasm. Functionally, the UvrABC repair system catalyzes the recognition and processing of DNA lesions. UvrC both incises the 5' and 3' sides of the lesion. The N-terminal half is responsible for the 3' incision and the C-terminal half is responsible for the 5' incision. This chain is UvrABC system protein C, found in Haemophilus influenzae (strain ATCC 51907 / DSM 11121 / KW20 / Rd).